We begin with the raw amino-acid sequence, 209 residues long: Orotate phosphoribosyltransferase (209 aa).

5-phospho-alpha-D-ribose 1-diphosphate contacts are provided by residues Arg-96, Lys-100, His-102, and 122–130; that span reads EDLISTGGS. Ser-126 is an orotate binding site.

This sequence belongs to the purine/pyrimidine phosphoribosyltransferase family. PyrE subfamily. As to quaternary structure, homodimer. Mg(2+) is required as a cofactor.

It carries out the reaction orotidine 5'-phosphate + diphosphate = orotate + 5-phospho-alpha-D-ribose 1-diphosphate. It participates in pyrimidine metabolism; UMP biosynthesis via de novo pathway; UMP from orotate: step 1/2. In terms of biological role, catalyzes the transfer of a ribosyl phosphate group from 5-phosphoribose 1-diphosphate to orotate, leading to the formation of orotidine monophosphate (OMP). The protein is Orotate phosphoribosyltransferase of Lactococcus lactis subsp. lactis (strain IL1403) (Streptococcus lactis).